An 892-amino-acid polypeptide reads, in one-letter code: Iodate reductase subunit IdrA (892 aa).

The [3Fe-4S] cluster site is built by Cys-27, Cys-30, and Cys-34. Residues 431 to 442 show a composition bias toward gly residues; that stretch reads RGGGHQRGGLSA. The tract at residues 431 to 452 is disordered; it reads RGGGHQRGGLSAGGNSEWLSPE.

The protein belongs to the prokaryotic molybdopterin-containing oxidoreductase family. The iodate reductase (Idr) complex is composed of a molybdopterin-dependent iodate reductase (IdrA and IdrB subunits) and two associated peroxidases (IdrP1 and IdrP2). Requires [3Fe-4S] cluster as cofactor. Mo-bis(molybdopterin guanine dinucleotide) is required as a cofactor.

Its subcellular location is the periplasm. Functionally, involved in iodate respiration. Probably catalyzes the reduction of iodate (IO(3)(-)) to hypoiodous acid (HIO) and H(2)O(2), using a reduced cytochrome c as the electron donor. The sequence is that of Iodate reductase subunit IdrA from Pseudomonas sp. (strain SCT).